A 268-amino-acid chain; its full sequence is Shikimate dehydrogenase (NADP(+)) (268 aa).

Shikimate-binding positions include 14 to 16 and Thr-61; that span reads SKS. The Proton acceptor role is filled by Lys-65. The shikimate site is built by Asn-86 and Asp-102. NADP(+) contacts are provided by residues 126 to 130, 149 to 154, and Met-213; these read GAGGA and NRTFSK. Shikimate is bound at residue Tyr-215. Gly-238 provides a ligand contact to NADP(+).

The protein belongs to the shikimate dehydrogenase family. In terms of assembly, homodimer.

The catalysed reaction is shikimate + NADP(+) = 3-dehydroshikimate + NADPH + H(+). The protein operates within metabolic intermediate biosynthesis; chorismate biosynthesis; chorismate from D-erythrose 4-phosphate and phosphoenolpyruvate: step 4/7. In terms of biological role, involved in the biosynthesis of the chorismate, which leads to the biosynthesis of aromatic amino acids. Catalyzes the reversible NADPH linked reduction of 3-dehydroshikimate (DHSA) to yield shikimate (SA). The sequence is that of Shikimate dehydrogenase (NADP(+)) from Haemophilus influenzae (strain PittEE).